We begin with the raw amino-acid sequence, 259 residues long: Small ribosomal subunit protein uS2 (259 aa).

Belongs to the universal ribosomal protein uS2 family.

The polypeptide is Small ribosomal subunit protein uS2 (Streptococcus pneumoniae serotype 4 (strain ATCC BAA-334 / TIGR4)).